A 510-amino-acid chain; its full sequence is Alpha-L-arabinofuranosidase B (510 aa).

An N-terminal signal peptide occupies residues 1–24 (MTMSRSSRSSVLALALATGSLVAA). Positions 25-342 (GPCDIYSSGG…ADIVAAKYAT (318 aa)) are catalytic. 3 disulfides stabilise this stretch: Cys-27–Cys-37, Cys-87–Cys-92, and Cys-182–Cys-183. Asn-89 is a glycosylation site (N-linked (GlcNAc...) asparagine). Substrate is bound at residue Asp-225. The Nucleophile role is filled by Glu-227. Residues Asn-228 and Gly-303 each coordinate substrate. The active-site Proton donor is Asp-304. Residues 343–510 (TSLISGPALT…VSWVVADGFA (168 aa)) form an ABD region. A disulfide bond links Cys-412 and Cys-450. Substrate contacts are provided by His-427, Asn-429, Phe-430, Asp-446, His-475, Glu-477, Leu-480, and Asp-500.

It belongs to the glycosyl hydrolase 54 family.

The protein localises to the secreted. It catalyses the reaction Hydrolysis of terminal non-reducing alpha-L-arabinofuranoside residues in alpha-L-arabinosides.. Its pathway is glycan metabolism; L-arabinan degradation. In terms of biological role, alpha-L-arabinofuranosidase involved in the degradation of arabinoxylan, a major component of plant hemicellulose. Able to hydrolyze 1,5-, 1,3- and 1,2-alpha-linkages not only in L-arabinofuranosyl oligosaccharides, but also in polysaccharides containing terminal non-reducing L-arabinofuranoses in side chains, like L-arabinan, arabinogalactan and arabinoxylan. This chain is Alpha-L-arabinofuranosidase B (abfB), found in Emericella nidulans (strain FGSC A4 / ATCC 38163 / CBS 112.46 / NRRL 194 / M139) (Aspergillus nidulans).